Consider the following 630-residue polypeptide: Plastin-3 (630 aa).

EF-hand domains follow at residues 12–47 (DELDELKEAFAKVDLNSNGFICDYELHELFKEANMP) and 52–87 (KVREIIQKLMLDGDRNKDGKISFDEFVYIFQEVKSS). Ca(2+)-binding residues include aspartate 25, asparagine 27, asparagine 29, glutamate 36, aspartate 65, asparagine 67, aspartate 69, lysine 71, and glutamate 76. Actin-binding regions lie at residues 109–382 (TSEL…ALTK) and 383–627 (PENQ…GRGM). 2 Calponin-homology (CH) domains span residues 123 to 239 (EEEK…KIGL) and 267 to 378 (LSPE…NKYP). 4 positions are modified to phosphoserine: serine 268, serine 293, serine 326, and serine 339. Residue threonine 391 is modified to Phosphothreonine. Calponin-homology (CH) domains lie at 397 to 506 (TREE…RRYT) and 518 to 627 (KAND…GRGM).

In terms of assembly, monomer.

It is found in the cytoplasm. Functionally, actin-bundling protein. This Bos taurus (Bovine) protein is Plastin-3 (PLS3).